The chain runs to 756 residues: Lysyl oxidase homolog 4 (756 aa).

An N-terminal signal peptide occupies residues 1–24 (MAWSPPATLFLFLLLLGQPPPSRP). SRCR domains follow at residues 32-133 (LRLV…VICH), 159-287 (VRLK…VSCV), 311-411 (VRLR…VRCN), and 421-529 (VRLA…VSCM). 17 disulfides stabilise this stretch: cysteine 58-cysteine 122, cysteine 71-cysteine 132, cysteine 102-cysteine 112, cysteine 191-cysteine 276, cysteine 204-cysteine 286, cysteine 251-cysteine 261, cysteine 336-cysteine 400, cysteine 349-cysteine 410, cysteine 380-cysteine 390, cysteine 450-cysteine 515, cysteine 463-cysteine 528, cysteine 497-cysteine 507, cysteine 558-cysteine 564, cysteine 610-cysteine 658, cysteine 642-cysteine 648, cysteine 670-cysteine 680, and cysteine 717-cysteine 731. N-linked (GlcNAc...) asparagine glycosylation is present at asparagine 198. Residues 533–736 (PDLVMNAQLV…WLHNCHTGNS (204 aa)) form a lysyl-oxidase like region. Positions 611, 613, and 615 each coordinate Cu cation. Asparagine 629 carries N-linked (GlcNAc...) asparagine glycosylation. Positions 638–674 (KASFCLEDTNCPTGLQRRYACANFGEQGVTVGCWDTY) form a cross-link, lysine tyrosylquinone (Lys-Tyr). Residue tyrosine 674 is modified to 2',4',5'-topaquinone.

Belongs to the lysyl oxidase family. Cu cation is required as a cofactor. The cofactor is lysine tyrosylquinone residue. The lysine tyrosylquinone cross-link (LTQ) is generated by condensation of the epsilon-amino group of a lysine with a topaquinone produced by oxidation of tyrosine. Post-translationally, may be proteolytically cleaved by BMP1. Expressed in many tissues, the highest levels among the tissues studied being in the skeletal muscle, testis and pancreas. Expressed in cartilage.

It localises to the secreted. Its subcellular location is the extracellular space. The enzyme catalyses L-lysyl-[protein] + O2 + H2O = (S)-2-amino-6-oxohexanoyl-[protein] + H2O2 + NH4(+). Inhibited by beta-aminopropionitrile (BAPN). Catalyzes the oxidative deamination of lysine and hydroxylysine residues in collagen and elastin, resulting in the formation of covalent cross-linkages, and the stabilization of collagen and elastin fibers. The polypeptide is Lysyl oxidase homolog 4 (LOXL4) (Homo sapiens (Human)).